The following is a 437-amino-acid chain: Sperm-associated antigen 4 protein (437 aa).

The segment covering 1-12 has biased composition (low complexity); it reads MRRSSRPGSASS. The disordered stretch occupies residues 1-88; sequence MRRSSRPGSA…KPAPRSHNWQ (88 aa). Polar residues-rich tracts occupy residues 19-31 and 72-88; these read NFFS…SITS and WAGS…HNWQ. 2 helical membrane-spanning segments follow: residues 135 to 155 and 166 to 186; these read FLSL…DVLV and FLFT…LGLL. Positions 197 to 244 form a coiled coil; it reads KEMLTLSEYHERVRSQGQQLQQLQAELDKLHKEVSTVRAANSERVAKL. An SUN domain is found at 265-425; sequence GASIDLQKTS…YRVRAHGVRT (161 aa).

In terms of assembly, homodimer. Interacts with ODF1. May associate with microtubules. Interacts with SUN3 and SYNE1; suggesting the formation of a spermatogenesis-specific LINC complex; a SUN domain-based heterotrimer with SUN3 may associate with SYNE1. Interacts with SEPT12 and LMNB1; during spermatogenesis. Predominantly epressed in testis. Expressed in ejaculated spermatozoa (at protein level).

The protein localises to the membrane. It is found in the cytoplasm. It localises to the cytoskeleton. The protein resides in the flagellum axoneme. Its subcellular location is the nucleus envelope. The protein localises to the nucleus inner membrane. Functionally, involved in spermatogenesis. Required for sperm head formation but not required to establish and maintain general polarity of the sperm head. Required for anchoring and organization of the manchette. Required for targeting of SUN3 and probably SYNE1 through a probable SUN1:SYNE3 LINC complex to the nuclear envelope and involved in accurate posterior sperm head localization of the complex. May anchor SUN3 the nuclear envelope. Involved in maintenance of the nuclear envelope integrity. May assist the organization and assembly of outer dense fibers (ODFs), a specific structure of the sperm tail. This is Sperm-associated antigen 4 protein (SPAG4) from Homo sapiens (Human).